The primary structure comprises 274 residues: Penicillin-insensitive murein endopeptidase (274 aa).

The N-terminal stretch at 1–19 is a signal peptide; sequence MKKTAIALLAWFVSSASLA. Disulfide bonds link Cys-44–Cys-265, Cys-187–Cys-235, and Cys-216–Cys-223. 6 residues coordinate Zn(2+): His-110, His-113, Asp-120, Asp-147, His-150, and His-211. The tract at residues 225 to 274 is disordered; it reads DQPLPPPGDGCGAELQSWFEPPKPGTTKPEKKTPPPLPPSCQALLDEHVL.

Belongs to the peptidase M74 family. Dimer. The cofactor is Zn(2+).

Its subcellular location is the periplasm. Murein endopeptidase that cleaves the D-alanyl-meso-2,6-diamino-pimelyl amide bond that connects peptidoglycan strands. Likely plays a role in the removal of murein from the sacculus. The chain is Penicillin-insensitive murein endopeptidase from Salmonella agona (strain SL483).